The chain runs to 907 residues: Protein translocase subunit SecA (907 aa).

Residues Gln-87, 105–109 (GEGKT), and Asp-512 contribute to the ATP site. The disordered stretch occupies residues 862-885 (AENQLDDGHSSDQNHSPMVRDERK). Over residues 867 to 885 (DDGHSSDQNHSPMVRDERK) the composition is skewed to basic and acidic residues. Zn(2+) contacts are provided by Cys-892, Cys-894, Cys-903, and His-904.

This sequence belongs to the SecA family. In terms of assembly, monomer and homodimer. Part of the essential Sec protein translocation apparatus which comprises SecA, SecYEG and auxiliary proteins SecDF-YajC and YidC. Requires Zn(2+) as cofactor.

The protein resides in the cell inner membrane. Its subcellular location is the cytoplasm. The enzyme catalyses ATP + H2O + cellular proteinSide 1 = ADP + phosphate + cellular proteinSide 2.. Part of the Sec protein translocase complex. Interacts with the SecYEG preprotein conducting channel. Has a central role in coupling the hydrolysis of ATP to the transfer of proteins into and across the cell membrane, serving both as a receptor for the preprotein-SecB complex and as an ATP-driven molecular motor driving the stepwise translocation of polypeptide chains across the membrane. The polypeptide is Protein translocase subunit SecA (Aliivibrio salmonicida (strain LFI1238) (Vibrio salmonicida (strain LFI1238))).